A 617-amino-acid polypeptide reads, in one-letter code: Elongation factor 4 (617 aa).

Positions 17–198 (AIIRNFCIIA…KIVRDLPAPV (182 aa)) constitute a tr-type G domain. Residues 29 to 34 (DHGKST) and 145 to 148 (NKID) contribute to the GTP site.

This sequence belongs to the TRAFAC class translation factor GTPase superfamily. Classic translation factor GTPase family. LepA subfamily.

The protein resides in the cell membrane. The enzyme catalyses GTP + H2O = GDP + phosphate + H(+). Its function is as follows. Required for accurate and efficient protein synthesis under certain stress conditions. May act as a fidelity factor of the translation reaction, by catalyzing a one-codon backward translocation of tRNAs on improperly translocated ribosomes. Back-translocation proceeds from a post-translocation (POST) complex to a pre-translocation (PRE) complex, thus giving elongation factor G a second chance to translocate the tRNAs correctly. Binds to ribosomes in a GTP-dependent manner. In Paenarthrobacter aurescens (strain TC1), this protein is Elongation factor 4.